We begin with the raw amino-acid sequence, 475 residues long: Eukaryotic translation initiation factor 3 subunit L (475 aa).

The region spanning 257 to 451 (DAIRMFSHIL…DLDYAMQGDL (195 aa)) is the PCI domain.

The protein belongs to the eIF-3 subunit L family. In terms of assembly, component of the eukaryotic translation initiation factor 3 (eIF-3) complex.

It is found in the cytoplasm. Functionally, component of the eukaryotic translation initiation factor 3 (eIF-3) complex, which is involved in protein synthesis of a specialized repertoire of mRNAs and, together with other initiation factors, stimulates binding of mRNA and methionyl-tRNAi to the 40S ribosome. The eIF-3 complex specifically targets and initiates translation of a subset of mRNAs involved in cell proliferation. In Sclerotinia sclerotiorum (strain ATCC 18683 / 1980 / Ss-1) (White mold), this protein is Eukaryotic translation initiation factor 3 subunit L.